A 526-amino-acid chain; its full sequence is ESX-1 secretion-associated protein EspB (526 aa).

Over residues Met-1–Arg-23 the composition is skewed to basic and acidic residues. 3 disordered regions span residues Met-1 to Glu-35, Arg-91 to Met-110, and Gln-271 to Gln-526. The span at Gly-303–Thr-328 shows a compositional bias: gly residues. The span at Pro-335–Gly-362 shows a compositional bias: low complexity. Over residues Ser-363–Glu-387 the composition is skewed to gly residues. Over residues Asp-393 to Asp-405 the composition is skewed to low complexity. A compositionally biased stretch (gly residues) spans Ala-413 to Met-429. Positions Pro-430–Ala-440 are enriched in low complexity. Gly residues predominate over residues Arg-451–Gln-484. Residues Gly-485–Ser-508 are compositionally biased toward basic and acidic residues.

This sequence belongs to the EspB family.

The protein localises to the secreted. In terms of biological role, involved in DNA conjugation, at least in the recipient strain. This is ESX-1 secretion-associated protein EspB from Mycolicibacterium smegmatis (strain MKD8) (Mycobacterium smegmatis).